A 283-amino-acid polypeptide reads, in one-letter code: ATP phosphoribosyltransferase (283 aa).

This sequence belongs to the ATP phosphoribosyltransferase family. Long subfamily. Requires Mg(2+) as cofactor.

Its subcellular location is the cytoplasm. It catalyses the reaction 1-(5-phospho-beta-D-ribosyl)-ATP + diphosphate = 5-phospho-alpha-D-ribose 1-diphosphate + ATP. It participates in amino-acid biosynthesis; L-histidine biosynthesis; L-histidine from 5-phospho-alpha-D-ribose 1-diphosphate: step 1/9. Its activity is regulated as follows. Feedback inhibited by histidine. In terms of biological role, catalyzes the condensation of ATP and 5-phosphoribose 1-diphosphate to form N'-(5'-phosphoribosyl)-ATP (PR-ATP). Has a crucial role in the pathway because the rate of histidine biosynthesis seems to be controlled primarily by regulation of HisG enzymatic activity. This is ATP phosphoribosyltransferase from Methanopyrus kandleri (strain AV19 / DSM 6324 / JCM 9639 / NBRC 100938).